Consider the following 559-residue polypeptide: MATDLSEAEPVHHKALPLLTGTQLIHTDKLSEKAEDDTMPIRRSVNSSRETPPKSKPAEGGEEVKADAEATSEESASAGEEQENETLPAAAPSEAEQPKEPENEEKGETKSSVETKKDDKDQSKEKEKKVKKTIPAWATLSASQLARAQKQTQMAATSRPKMDAILTEAIKACFQKSGASVVAIRKYIIHKYPSLELERRGYLLKQALKRELERGIIRQVKGKGASGSFVVVSNAGKTVQKARDRKKSTSVSTPEQQVKLEDILPLAFTRLCEPKEASYSLIKKYVSQYYPKLKVDIRPQLLKNALQRAVEKGQLEQITGKGASGTFQLKKSGEKPLLGGTLMEDAILSAIAAMNEPKTCSTTALKKYILENHPGTNSNFQVHLLKRTLQRCEKNGWLEQISGKGFSGTFQLCFPYYPSPDVLYPEKQQDEDSEESQEEEEEESEEEEESEEEESEEEEPPPKKRMQKRPPPKSRSRAPPMKRRESKPKPRKTPAAHQGKAKPPPKVKTPVKKAKPAAPAIKKPSGGSSSKKPTASGRKEVKPSAKGKSAMRKSLRAKK.

A disordered region spans residues 1–132 (MATDLSEAEP…SKEKEKKVKK (132 aa)). 2 stretches are compositionally biased toward basic and acidic residues: residues 51–68 (TPPKSKPAEGGEEVKADA) and 96–128 (EQPKEPENEEKGETKSSVETKKDDKDQSKEKEK). 3 consecutive H15 domains span residues 158–233 (SRPK…VVVS), 256–331 (QQVK…QLKK), and 339–414 (GGTL…QLCF). The short motif at 256–260 (QQVKL) is the PxVxL motif element. Positions 421–559 (DVLYPEKQQD…AMRKSLRAKK (139 aa)) are disordered. A compositionally biased stretch (acidic residues) spans 429 to 459 (QDEDSEESQEEEEEESEEEEESEEEESEEEE). The segment covering 463–515 (KKRMQKRPPPKSRSRAPPMKRRESKPKPRKTPAAHQGKAKPPPKVKTPVKKAK) has biased composition (basic residues). Low complexity predominate over residues 516 to 533 (PAAPAIKKPSGGSSSKKP). Residues 549–559 (SAMRKSLRAKK) are compositionally biased toward basic residues.

It localises to the nucleus. Its subcellular location is the chromosome. Component of heterochromatin that maintains heterochromatin integrity during G1/S progression and regulates the duration of G1 phase to critically influence cell proliferative capacity. In Gallus gallus (Chicken), this protein is Heterochromatin protein 1-binding protein 3 (HP1BP3).